The sequence spans 366 residues: Tubulin-like protein CetZ (366 aa).

GTP-binding positions include 10 to 14, 103 to 105, Glu-136, Asn-163, and Asn-181; these read QCGTK and GTG.

This sequence belongs to the CetZ family.

The protein resides in the cytoplasm. Involved in cell shape control. The sequence is that of Tubulin-like protein CetZ from Pyrococcus furiosus (strain ATCC 43587 / DSM 3638 / JCM 8422 / Vc1).